A 221-amino-acid chain; its full sequence is Holliday junction branch migration complex subunit RuvA (221 aa).

Residues 1-61 (MQIYQFGKIV…DYTKITYGFA (61 aa)) are domain I. Residues 62-139 (SFRERILFED…RFNENHKNQT (78 aa)) form a domain II region. Residues 133–155 (ENHKNQTEETNQDSQEKELEKKD) form a disordered region. Residues 140-166 (EETNQDSQEKELEKKDDLADITIQKSN) form a flexible linker region. Positions 146 to 155 (SQEKELEKKD) are enriched in basic and acidic residues. A domain III region spans residues 167-221 (LEDKTAANLEDTLKMLGFKPRQIDYALTKVEPNENFENLIENAIKIISNAREFRN).

Belongs to the RuvA family. As to quaternary structure, homotetramer. Forms an RuvA(8)-RuvB(12)-Holliday junction (HJ) complex. HJ DNA is sandwiched between 2 RuvA tetramers; dsDNA enters through RuvA and exits via RuvB. An RuvB hexamer assembles on each DNA strand where it exits the tetramer. Each RuvB hexamer is contacted by two RuvA subunits (via domain III) on 2 adjacent RuvB subunits; this complex drives branch migration. In the full resolvosome a probable DNA-RuvA(4)-RuvB(12)-RuvC(2) complex forms which resolves the HJ.

The protein resides in the cytoplasm. The RuvA-RuvB-RuvC complex processes Holliday junction (HJ) DNA during genetic recombination and DNA repair, while the RuvA-RuvB complex plays an important role in the rescue of blocked DNA replication forks via replication fork reversal (RFR). RuvA specifically binds to HJ cruciform DNA, conferring on it an open structure. The RuvB hexamer acts as an ATP-dependent pump, pulling dsDNA into and through the RuvAB complex. HJ branch migration allows RuvC to scan DNA until it finds its consensus sequence, where it cleaves and resolves the cruciform DNA. The protein is Holliday junction branch migration complex subunit RuvA of Mesomycoplasma hyopneumoniae (strain J / ATCC 25934 / NCTC 10110) (Mycoplasma hyopneumoniae).